The chain runs to 161 residues: SsrA-binding protein (161 aa).

It belongs to the SmpB family.

It localises to the cytoplasm. Functionally, required for rescue of stalled ribosomes mediated by trans-translation. Binds to transfer-messenger RNA (tmRNA), required for stable association of tmRNA with ribosomes. tmRNA and SmpB together mimic tRNA shape, replacing the anticodon stem-loop with SmpB. tmRNA is encoded by the ssrA gene; the 2 termini fold to resemble tRNA(Ala) and it encodes a 'tag peptide', a short internal open reading frame. During trans-translation Ala-aminoacylated tmRNA acts like a tRNA, entering the A-site of stalled ribosomes, displacing the stalled mRNA. The ribosome then switches to translate the ORF on the tmRNA; the nascent peptide is terminated with the 'tag peptide' encoded by the tmRNA and targeted for degradation. The ribosome is freed to recommence translation, which seems to be the essential function of trans-translation. This is SsrA-binding protein from Psychromonas ingrahamii (strain DSM 17664 / CCUG 51855 / 37).